A 314-amino-acid polypeptide reads, in one-letter code: Dihydroorotate dehydrogenase (fumarate) (314 aa).

Substrate-binding positions include K46, N70–L74, and N130. K46 to S47 contacts FMN. N130 contributes to the FMN binding site. Residues S132 and C133 each act as nucleophile in the active site. FMN-binding residues include K167 and I195. Substrate is bound at residue N196–S197. FMN-binding positions include G224, G252 to G253, and G274 to T275.

Belongs to the dihydroorotate dehydrogenase family. Type 1 subfamily. In terms of assembly, homodimer. It depends on FMN as a cofactor.

It localises to the cytoplasm. It carries out the reaction (S)-dihydroorotate + fumarate = orotate + succinate. It functions in the pathway pyrimidine metabolism; UMP biosynthesis via de novo pathway. Its function is as follows. Catalyzes the conversion of dihydroorotate to orotate with fumarate as the electron acceptor. The sequence is that of Dihydroorotate dehydrogenase (fumarate) (URA1) from Saccharomyces paradoxus (Yeast).